The following is a 271-amino-acid chain: Eukaryotic translation initiation factor 3 subunit G (271 aa).

2 disordered regions span residues 1 to 29 (MPALDDIKSSWADEVESDSGSLPPPSEVI) and 143 to 185 (KPTK…MRGR). The RRM domain maps to 189-267 (SAIRISNLSE…LILSVEWSKP (79 aa)).

Belongs to the eIF-3 subunit G family. In terms of assembly, component of the eukaryotic translation initiation factor 3 (eIF-3) complex.

It localises to the cytoplasm. In terms of biological role, RNA-binding component of the eukaryotic translation initiation factor 3 (eIF-3) complex, which is involved in protein synthesis of a specialized repertoire of mRNAs and, together with other initiation factors, stimulates binding of mRNA and methionyl-tRNAi to the 40S ribosome. The eIF-3 complex specifically targets and initiates translation of a subset of mRNAs involved in cell proliferation. This subunit can bind 18S rRNA. This chain is Eukaryotic translation initiation factor 3 subunit G, found in Anopheles gambiae (African malaria mosquito).